The following is a 99-amino-acid chain: DNA-directed RNA polymerase subunit omega (99 aa).

It belongs to the RNA polymerase subunit omega family. As to quaternary structure, the RNAP catalytic core consists of 2 alpha, 1 beta, 1 beta' and 1 omega subunit. When a sigma factor is associated with the core the holoenzyme is formed, which can initiate transcription.

It catalyses the reaction RNA(n) + a ribonucleoside 5'-triphosphate = RNA(n+1) + diphosphate. In terms of biological role, promotes RNA polymerase assembly. Latches the N- and C-terminal regions of the beta' subunit thereby facilitating its interaction with the beta and alpha subunits. The sequence is that of DNA-directed RNA polymerase subunit omega from Xanthomonas axonopodis pv. citri (strain 306).